Consider the following 447-residue polypeptide: Phosphoglucosamine mutase (447 aa).

The active-site Phosphoserine intermediate is the Ser-103. Positions 103, 242, 244, and 246 each coordinate Mg(2+). A Phosphoserine modification is found at Ser-103.

Belongs to the phosphohexose mutase family. Mg(2+) is required as a cofactor. Activated by phosphorylation.

It carries out the reaction alpha-D-glucosamine 1-phosphate = D-glucosamine 6-phosphate. Its function is as follows. Catalyzes the conversion of glucosamine-6-phosphate to glucosamine-1-phosphate. This is Phosphoglucosamine mutase from Marinobacter nauticus (strain ATCC 700491 / DSM 11845 / VT8) (Marinobacter aquaeolei).